Reading from the N-terminus, the 279-residue chain is Pleckstrin homology domain-containing family F member 1 (279 aa).

The PH domain maps to 35–131; sequence VLLGEGVLTK…WISHIEECVR (97 aa). The FYVE-type zinc-finger motif lies at 152–212; that stretch reads DKATDICMRC…VCSLCYRELA (61 aa). Positions 158, 161, 175, 178, 183, 186, 204, and 207 each coordinate Zn(2+). Residues 218-264 form a disordered region; that stretch reads EEAEEQGAGSPGQPAHLARPICGASSGDDDDSDEDKEGSRDGDWPSS. The span at 244–253 shows a compositional bias: acidic residues; the sequence is GDDDDSDEDK.

Highly expressed in heart and skeletal muscle. Weakly expressed in brain, thymus, spleen, kidney, liver, small intestine, placenta and lung.

The protein resides in the nucleus. It localises to the cytoplasm. Its subcellular location is the perinuclear region. The protein localises to the lysosome. Its function is as follows. May induce apoptosis through the lysosomal-mitochondrial pathway. Translocates to the lysosome initiating the permeabilization of lysosomal membrane (LMP) and resulting in the release of CTSD and CTSL to the cytoplasm. Triggers the caspase-independent apoptosis by altering mitochondrial membrane permeabilization (MMP) resulting in the release of PDCD8. This Homo sapiens (Human) protein is Pleckstrin homology domain-containing family F member 1 (PLEKHF1).